The chain runs to 180 residues: Protein GrpE (180 aa).

The protein belongs to the GrpE family. In terms of assembly, homodimer.

The protein resides in the cytoplasm. Its function is as follows. Participates actively in the response to hyperosmotic and heat shock by preventing the aggregation of stress-denatured proteins, in association with DnaK and GrpE. It is the nucleotide exchange factor for DnaK and may function as a thermosensor. Unfolded proteins bind initially to DnaJ; upon interaction with the DnaJ-bound protein, DnaK hydrolyzes its bound ATP, resulting in the formation of a stable complex. GrpE releases ADP from DnaK; ATP binding to DnaK triggers the release of the substrate protein, thus completing the reaction cycle. Several rounds of ATP-dependent interactions between DnaJ, DnaK and GrpE are required for fully efficient folding. This is Protein GrpE from Picrophilus torridus (strain ATCC 700027 / DSM 9790 / JCM 10055 / NBRC 100828 / KAW 2/3).